We begin with the raw amino-acid sequence, 925 residues long: Leucine--tRNA ligase (925 aa).

The 'HIGH' region signature appears at 40–51 (PYPSGAGLHVGH). The 'KMSKS' region signature appears at 700–704 (KMSKS). Lys-703 contributes to the ATP binding site.

It belongs to the class-I aminoacyl-tRNA synthetase family.

The protein localises to the cytoplasm. The enzyme catalyses tRNA(Leu) + L-leucine + ATP = L-leucyl-tRNA(Leu) + AMP + diphosphate. The sequence is that of Leucine--tRNA ligase from Porphyromonas gingivalis (strain ATCC 33277 / DSM 20709 / CIP 103683 / JCM 12257 / NCTC 11834 / 2561).